The sequence spans 618 residues: Two-component response regulator-like APRR1 (618 aa).

Residues 20-138 form the Response regulatory domain; it reads RILLCDNDST…ELLNLWTHMW (119 aa). Composition is skewed to polar residues over residues 161-174, 187-200, 246-257, 324-334, and 375-389; these read SDQS…TNLF, NPQR…ENEW, RNSNPAQFSSAP, PKSTVLRTNGQ, and TEQY…QNGA. Disordered stretches follow at residues 161 to 200, 239 to 260, 316 to 338, 368 to 395, and 573 to 618; these read SDQS…ENEW, SHHE…PKKS, TKQA…DPPL, QAHR…PHSL, and VRKM…ALGT. A CCT domain is found at 533-575; that stretch reads REEALLKFRRKRNQRCFDKKIRYVNRKRLAERRPRVKGQFVRK. The stretch at 588-610 forms a coiled coil; sequence DSADYDDEEEEEEEEEEENRDSS. Over residues 590-606 the composition is skewed to acidic residues; it reads ADYDDEEEEEEEEEEEN.

The protein belongs to the ARR-like family. As to quaternary structure, interacts with PIF1, PIL2, PIF3, PIF4, PIL5, PIL6, ABI3 (via C-terminus), ADO1/ZTL, ADO2, APRR3 and TCP21/CHE. Both the phosphorylated and the dephosphorylated forms interact with ADO1/ZLT. In terms of processing, phosphorylated; during the day. Phosphorylation is required for optimal interaction with APRR3. Expressed in leaves, flowers and siliques. Restricted to the vasculature.

The protein resides in the nucleus. In terms of biological role, controls photoperiodic flowering response. Component of the circadian clock. Expression of several members of the ARR-like family is controlled by circadian rhythm. The particular coordinated sequential expression of APRR9, APRR7, APRR5, APRR3 and APPR1 result to circadian waves that may be at the basis of the endogenous circadian clock. Positive regulator of CCA1 and LHY expression. This Arabidopsis thaliana (Mouse-ear cress) protein is Two-component response regulator-like APRR1 (APRR1).